A 926-amino-acid chain; its full sequence is Thyroid peroxidase (926 aa).

The signal sequence occupies residues 1 to 14 (MGARAVLGVTLAVA). Over 19–844 (FFASILRRKD…TCVDAGRLPR (826 aa)) the chain is Extracellular. N-linked (GlcNAc...) asparagine glycosylation is present at asparagine 129. Cysteines 142 and 158 form a disulfide. Residue aspartate 238 participates in heme b binding. The active-site Proton acceptor is histidine 239. Aspartate 240 provides a ligand contact to Ca(2+). Cystine bridges form between cysteine 259/cysteine 269 and cysteine 263/cysteine 286. Residues asparagine 277 and asparagine 307 are each glycosylated (N-linked (GlcNAc...) asparagine). Positions 321, 323, 325, and 327 each coordinate Ca(2+). Asparagine 342 carries an N-linked (GlcNAc...) asparagine glycan. Heme b-binding residues include glutamate 398 and histidine 493. Intrachain disulfides connect cysteine 596–cysteine 653, cysteine 694–cysteine 719, cysteine 740–cysteine 780, cysteine 766–cysteine 792, cysteine 798–cysteine 812, cysteine 806–cysteine 821, and cysteine 823–cysteine 836. The Sushi domain maps to 738–793 (DACGFPDPVEDGGFLLCEERGQRVLVFSCRHGFRLRGPAQITCTPRGWDSPPPLCK). One can recognise an EGF-like; calcium-binding domain in the interval 794 to 837 (DINECEDETDPPCHASARCKNTKGGVLCECSDPLVLGEDGRTCV). A helical transmembrane segment spans residues 845 to 869 (ASVVSIALGAVLVCGLAGLAWTVVC). The Cytoplasmic portion of the chain corresponds to 870-926 (RWTHADARPLLPVGEGEGDGKSPSLPLPGCGNRRDVGAAPALEVEQDLSCGSRGLCE).

It belongs to the peroxidase family. XPO subfamily. In terms of assembly, interacts with DUOX1, DUOX2 and CYBA. Requires Ca(2+) as cofactor. Heme b serves as cofactor. In terms of processing, heme is covalently bound through a H(2)O(2)-dependent autocatalytic process. Heme insertion is important for the delivery of protein at the cell surface. Post-translationally, cleaved in its N-terminal part. N-glycosylated; contains mannose and N-acetylglucosamine.

The protein resides in the membrane. The catalysed reaction is 2 iodide + H2O2 + 2 H(+) = diiodine + 2 H2O. It carries out the reaction [thyroglobulin]-L-tyrosine + iodide + H2O2 + H(+) = [thyroglobulin]-3-iodo-L-tyrosine + 2 H2O. It catalyses the reaction [thyroglobulin]-3-iodo-L-tyrosine + iodide + H2O2 + H(+) = [thyroglobulin]-3,5-diiodo-L-tyrosine + 2 H2O. The enzyme catalyses 2 [thyroglobulin]-3,5-diiodo-L-tyrosine + H2O2 = [thyroglobulin]-L-thyroxine + [thyroglobulin]-dehydroalanine + 2 H2O. The catalysed reaction is [thyroglobulin]-3-iodo-L-tyrosine + [thyroglobulin]-3,5-diiodo-L-tyrosine + H2O2 = [thyroglobulin]-3,3',5-triiodo-L-thyronine + [thyroglobulin]-dehydroalanine + 2 H2O. It participates in hormone biosynthesis; thyroid hormone biosynthesis. Iodination and coupling of the hormonogenic tyrosines in thyroglobulin to yield the thyroid hormones T(3) and T(4). The chain is Thyroid peroxidase (TPO) from Sus scrofa (Pig).